The chain runs to 148 residues: Arginine repressor (148 aa).

It belongs to the ArgR family.

The protein resides in the cytoplasm. The protein operates within amino-acid biosynthesis; L-arginine biosynthesis [regulation]. Regulates arginine biosynthesis genes. This Pelodictyon phaeoclathratiforme (strain DSM 5477 / BU-1) protein is Arginine repressor.